Here is a 143-residue protein sequence, read N- to C-terminus: MSLRHMSRRASRFGVVAVASIGLAAAAQSVAFAAPAFSVSPASGLSDGQSVSVSVSGAAAGETYYIAQCAPVGGQDACNPATATSFTTDASGAASFSFVVRKSYAGSTPEGTPVGSVDCATDACNLGAGNSGLDLGHVALTFG.

The first 33 residues, 1–33 (MSLRHMSRRASRFGVVAVASIGLAAAAQSVAFA), serve as a signal peptide directing secretion. 2 disulfides stabilise this stretch: Cys69-Cys78 and Cys119-Cys124.

It belongs to the neocarzinostatin family.

Binds non-covalently to a chromophore which is the cytotoxic and mutagenic component of the antibiotic. The chromophore binds to DNA as a weak intercalator and causes single- and double-strand breaks. This is Actinoxanthin (axnA) from Streptomyces globisporus.